The sequence spans 949 residues: Thrombospondin-4-B (949 aa).

The signal sequence occupies residues 1 to 22; that stretch reads MAGTMHLLTAVSLILMLSSANA. Positions 23-198 constitute a Laminin G-like domain; that stretch reads ESTVYNLLTS…LEELKLAYGD (176 aa). Cystine bridges form between cysteine 276-cysteine 287, cysteine 281-cysteine 296, cysteine 299-cysteine 310, cysteine 316-cysteine 327, cysteine 321-cysteine 336, cysteine 339-cysteine 363, cysteine 369-cysteine 383, cysteine 377-cysteine 392, cysteine 395-cysteine 407, cysteine 413-cysteine 427, cysteine 421-cysteine 437, cysteine 439-cysteine 450, cysteine 466-cysteine 471, cysteine 476-cysteine 496, cysteine 512-cysteine 532, cysteine 535-cysteine 555, cysteine 571-cysteine 591, cysteine 594-cysteine 614, cysteine 632-cysteine 652, cysteine 672-cysteine 692, and cysteine 708-cysteine 929. An EGF-like 1; calcium-binding domain is found at 312-349; sequence DVDECQFNPCFPGVRCVNMAPGFRCEACPLGFTGKPLE. The EGF-like 2; calcium-binding domain maps to 365–408; the sequence is DIDECKGPDNGGCTANSICVNSVGSYQCGRCKTGFTGDQIRGCK. Residues 409-451 enclose the EGF-like 3 domain; that stretch reads PEKSCGNRLQNPCDPNAQCTEERDGTITCQCGIGWAGNGYLCG. TSP type-3 repeat units lie at residues 452–484, 485–520, 521–543, 544–579, 580–602, 603–640, 641–680, and 681–716; these read KDTD…NSGQ, EDAD…NINQ, QNSD…NPDQ, RDTD…NRDQ, LDRD…NPNQ, SDID…NSSQ, LDTD…NPEQ, and IDDN…EITL. Positions 578–671 are disordered; that stretch reads DQLDRDGDGV…PDSLPPGPDN (94 aa). N-linked (GlcNAc...) asparagine glycans are attached at residues asparagine 601 and asparagine 637. Positions 649–660 are enriched in acidic residues; sequence GDECDDDDDNDG. The TSP C-terminal domain maps to 720–934; the sequence is RAYQTVVLDP…LKYRCNDTIP (215 aa). An N-linked (GlcNAc...) asparagine glycan is attached at asparagine 930.

Belongs to the thrombospondin family. In terms of assembly, homotrimer; disulfide-linked.

The protein localises to the endoplasmic reticulum. It is found in the sarcoplasmic reticulum. Its subcellular location is the secreted. It localises to the extracellular space. The protein resides in the extracellular matrix. Adhesive glycoprotein that mediates cell-to-cell and cell-to-matrix interactions and may be involved in various processes including cellular proliferation, migration, adhesion and attachment. May play a role in ER stress response. The polypeptide is Thrombospondin-4-B (thbs4b) (Danio rerio (Zebrafish)).